Consider the following 286-residue polypeptide: 4-hydroxybenzoate octaprenyltransferase (286 aa).

A run of 7 helical transmembrane segments spans residues 20-40 (IGIL…ADGM), 43-63 (PMIL…GCAI), 83-103 (LATG…LSLC), 135-155 (FFAM…PMAF), 160-180 (GTVP…VIAY), 209-229 (VAGI…AGIL), and 234-254 (IWFY…YTMI).

This sequence belongs to the UbiA prenyltransferase family. Mg(2+) is required as a cofactor.

Its subcellular location is the cell inner membrane. The catalysed reaction is all-trans-octaprenyl diphosphate + 4-hydroxybenzoate = 4-hydroxy-3-(all-trans-octaprenyl)benzoate + diphosphate. It functions in the pathway cofactor biosynthesis; ubiquinone biosynthesis. Catalyzes the prenylation of para-hydroxybenzoate (PHB) with an all-trans polyprenyl group. Mediates the second step in the final reaction sequence of ubiquinone-8 (UQ-8) biosynthesis, which is the condensation of the polyisoprenoid side chain with PHB, generating the first membrane-bound Q intermediate 3-octaprenyl-4-hydroxybenzoate. This Nitrosomonas eutropha (strain DSM 101675 / C91 / Nm57) protein is 4-hydroxybenzoate octaprenyltransferase.